Consider the following 470-residue polypeptide: UDP-N-acetylmuramoylalanine--D-glutamate ligase (470 aa).

124–130 (GTNGKTT) contacts ATP.

The protein belongs to the MurCDEF family.

The protein localises to the cytoplasm. It carries out the reaction UDP-N-acetyl-alpha-D-muramoyl-L-alanine + D-glutamate + ATP = UDP-N-acetyl-alpha-D-muramoyl-L-alanyl-D-glutamate + ADP + phosphate + H(+). It functions in the pathway cell wall biogenesis; peptidoglycan biosynthesis. Cell wall formation. Catalyzes the addition of glutamate to the nucleotide precursor UDP-N-acetylmuramoyl-L-alanine (UMA). The protein is UDP-N-acetylmuramoylalanine--D-glutamate ligase of Prochlorococcus marinus (strain SARG / CCMP1375 / SS120).